A 341-amino-acid polypeptide reads, in one-letter code: UDP-3-O-acylglucosamine N-acyltransferase (341 aa).

The active-site Proton acceptor is H239.

Belongs to the transferase hexapeptide repeat family. LpxD subfamily. Homotrimer.

The catalysed reaction is a UDP-3-O-[(3R)-3-hydroxyacyl]-alpha-D-glucosamine + a (3R)-hydroxyacyl-[ACP] = a UDP-2-N,3-O-bis[(3R)-3-hydroxyacyl]-alpha-D-glucosamine + holo-[ACP] + H(+). It participates in bacterial outer membrane biogenesis; LPS lipid A biosynthesis. Catalyzes the N-acylation of UDP-3-O-acylglucosamine using 3-hydroxyacyl-ACP as the acyl donor. Is involved in the biosynthesis of lipid A, a phosphorylated glycolipid that anchors the lipopolysaccharide to the outer membrane of the cell. This Shewanella sp. (strain MR-4) protein is UDP-3-O-acylglucosamine N-acyltransferase.